Here is a 694-residue protein sequence, read N- to C-terminus: Inactive protein-arginine deiminase type-6 (694 aa).

Residues Ser-10 and Ser-446 each carry the phosphoserine modification.

It belongs to the protein arginine deiminase family. As to quaternary structure, homodimers. Associates with alpha-tubulin. Phosphorylation at Ser-10, possibly by RSK-type kinases, and Ser-446 creates binding sites for 14-3-3 proteins. In terms of tissue distribution, highly expressed in oocytes and weakly expressed in other somatic tissues.

Its subcellular location is the cytoplasm. The protein resides in the cytoplasmic vesicle. The protein localises to the secretory vesicle. It localises to the cortical granule. It is found in the nucleus. In terms of biological role, structural constituent of cytoplasmic lattices, which plays a key role in early embryonic development. Cytoplasmic lattices consist in fibrous structures found in the cytoplasm of oocytes and preimplantation embryos. They are required to store maternal proteins critical for embryonic development, such as ribosomal proteins and proteins that control epigenetic reprogramming of the preimplantation embryo, and prevent their degradation or activation. In contrast to other members of the family, does not show protein-arginine deiminase activity due to its inability to bind Ca(2+). The protein is Inactive protein-arginine deiminase type-6 of Homo sapiens (Human).